A 292-amino-acid polypeptide reads, in one-letter code: Transforming growth factor-beta receptor type 3-like protein (292 aa).

The first 16 residues, 1–16 (MLGTVLLLALLPGITT), serve as a signal peptide directing secretion. One can recognise a ZP; truncated domain in the interval 17–170 (LPSGPPAPPF…APAPLTPPPP (154 aa)). The Extracellular portion of the chain corresponds to 17 to 244 (LPSGPPAPPF…PAPAALEPAP (228 aa)). The cysteines at positions 85 and 147 are disulfide-linked. The interval 160–236 (RAPAPLTPPP…AVRPEPPAPA (77 aa)) is disordered. Composition is skewed to pro residues over residues 164–175 (PLTPPPPPPPSR) and 213–222 (PRPPPRPPKS). The helical transmembrane segment at 245 to 265 (VVALVLAAFVLGAALAAGLGL) threads the bilayer. The Cytoplasmic segment spans residues 266–292 (VCAHSAPHAPGPPARASPSGPQPRRSQ). The interval 273–292 (HAPGPPARASPSGPQPRRSQ) is disordered. Residues 281–292 (ASPSGPQPRRSQ) show a composition bias toward low complexity.

Post-translationally, glycosylated. In terms of tissue distribution, expressed in pituitary gland gonadotrope cells.

It localises to the cell membrane. Expressed in gonadotrope cells, acts as an inhibin B coreceptor and regulates follicle-stimulating hormone (FSH) levels and female fertility. In Homo sapiens (Human), this protein is Transforming growth factor-beta receptor type 3-like protein.